The primary structure comprises 338 residues: Tetraacyldisaccharide 4'-kinase (338 aa).

63 to 70 serves as a coordination point for ATP; the sequence is TVGGAGKT.

Belongs to the LpxK family.

It catalyses the reaction a lipid A disaccharide + ATP = a lipid IVA + ADP + H(+). It functions in the pathway glycolipid biosynthesis; lipid IV(A) biosynthesis; lipid IV(A) from (3R)-3-hydroxytetradecanoyl-[acyl-carrier-protein] and UDP-N-acetyl-alpha-D-glucosamine: step 6/6. Transfers the gamma-phosphate of ATP to the 4'-position of a tetraacyldisaccharide 1-phosphate intermediate (termed DS-1-P) to form tetraacyldisaccharide 1,4'-bis-phosphate (lipid IVA). The chain is Tetraacyldisaccharide 4'-kinase from Hahella chejuensis (strain KCTC 2396).